We begin with the raw amino-acid sequence, 187 residues long: Protein GrpE (187 aa).

The disordered stretch occupies residues M1–D22. Residues L7–D22 show a composition bias toward low complexity.

It belongs to the GrpE family. In terms of assembly, homodimer.

It is found in the cytoplasm. Its function is as follows. Participates actively in the response to hyperosmotic and heat shock by preventing the aggregation of stress-denatured proteins, in association with DnaK and GrpE. It is the nucleotide exchange factor for DnaK and may function as a thermosensor. Unfolded proteins bind initially to DnaJ; upon interaction with the DnaJ-bound protein, DnaK hydrolyzes its bound ATP, resulting in the formation of a stable complex. GrpE releases ADP from DnaK; ATP binding to DnaK triggers the release of the substrate protein, thus completing the reaction cycle. Several rounds of ATP-dependent interactions between DnaJ, DnaK and GrpE are required for fully efficient folding. The protein is Protein GrpE of Pseudomonas syringae pv. tomato (strain ATCC BAA-871 / DC3000).